Consider the following 624-residue polypeptide: Cilia- and flagella-associated protein 206 (624 aa).

Belongs to the CFAP206 family.

It is found in the cytoplasm. Its subcellular location is the cytoskeleton. The protein localises to the cilium axoneme. It localises to the cilium basal body. Functionally, essential for sperm motility and is involved in the regulation of the beating frequency of motile cilia on the epithelial cells of the respiratory tract. Required for the establishment of radial spokes in sperm flagella. In Danio rerio (Zebrafish), this protein is Cilia- and flagella-associated protein 206 (cfap206).